The primary structure comprises 309 residues: L-arabinose 1-dehydrogenase (NAD(P)(+)) (309 aa).

NADP(+)-binding positions include isoleucine 15 and 37 to 38 (SR). The Proton donor role is filled by lysine 91. Aspartate 169 is a binding site for NADP(+).

It belongs to the Gfo/Idh/MocA family. In terms of assembly, monomer.

The catalysed reaction is alpha-L-arabinopyanose + NAD(+) = L-arabinono-1,4-lactone + NADH + H(+). The enzyme catalyses alpha-L-arabinopyanose + NADP(+) = L-arabinono-1,4-lactone + NADPH + H(+). It catalyses the reaction D-galactose + NAD(+) = D-galactono-1,4-lactone + NADH + H(+). It carries out the reaction D-galactose + NADP(+) = D-galactono-1,5-lactone + NADPH + H(+). Its pathway is carbohydrate degradation; L-arabinose degradation via L-arabinono-1,4-lactone pathway. In terms of biological role, catalyzes the NAD(P)(+)-dependent conversion of L-arabinose to L-arabino-gamma-lactone. Is involved in a degradation pathway of L-arabinose that allows A.brasilense to grow on L-arabinose as a sole carbon source. Prefers NADP(+) to NAD(+) as electron acceptor. Displays high catalytic efficiency for both L-arabinose and D-galactose in vitro. However, the enzyme appears to be involved in the metabolism of L-arabinose but not D-galactose in vivo. To a lesser extent, is also active on D-talose and D-xylose as substrates in vitro, but not with D-arabinose, D-glucose, D-ribose, L-xylose, L-mannose, L-lyxose, and D-fructose. This is L-arabinose 1-dehydrogenase (NAD(P)(+)) (araA) from Azospirillum brasilense.